The following is an 823-amino-acid chain: Molybdenum cofactor sulfurase (823 aa).

An N6-(pyridoxal phosphate)lysine modification is found at Lys-228. Cys-392 is an active-site residue. The tract at residues 628 to 667 (SSTRLAEPRRGLGSRKSPLRPAMPGAFPQDTPTPEAERNP) is disordered. One can recognise an MOSC domain in the interval 644-819 (SPLRPAMPGA…VMVGDVVTPS (176 aa)).

The protein belongs to the class-V pyridoxal-phosphate-dependent aminotransferase family. MOCOS subfamily. Requires pyridoxal 5'-phosphate as cofactor.

The enzyme catalyses Mo-molybdopterin + L-cysteine + AH2 = thio-Mo-molybdopterin + L-alanine + A + H2O. It functions in the pathway cofactor biosynthesis; molybdopterin biosynthesis. Its function is as follows. Sulfurates the molybdenum cofactor. Sulfation of molybdenum is essential for xanthine dehydrogenase (XDH) and aldehyde oxidase (ADO) enzymes in which molybdenum cofactor is liganded by 1 oxygen and 1 sulfur atom in active form. The polypeptide is Molybdenum cofactor sulfurase (Aspergillus niger (strain ATCC MYA-4892 / CBS 513.88 / FGSC A1513)).